Here is a 271-residue protein sequence, read N- to C-terminus: Virulence regulon transcriptional activator VirF (271 aa).

The 99-residue stretch at 167–265 folds into the HTH araC/xylS-type domain; the sequence is ERLQKFMEEN…GCTPSQARLT (99 aa). 2 DNA-binding regions (H-T-H motif) span residues 184–205 and 232–255; these read SKFAREFGMGLTTFKELFGTVY and IVDIAMEAGFSSQSYFTQSYRRRF.

Functionally, transcriptional activator of the Yersinia virulence regulon. The polypeptide is Virulence regulon transcriptional activator VirF (virF) (Yersinia enterocolitica serotype O:8 / biotype 1B (strain NCTC 13174 / 8081)).